Here is a 211-residue protein sequence, read N- to C-terminus: Prolactin-3C1 (211 aa).

Positions 1–29 (MQLSLTQARTWKGLLLLVSCMILWISVTP) are cleaved as a signal peptide. N-linked (GlcNAc...) asparagine glycosylation is found at asparagine 77 and asparagine 173. A disulfide bridge connects residues cysteine 80 and cysteine 187.

It belongs to the somatotropin/prolactin family. Expressed exclusively in decidual tissue.

It localises to the secreted. The polypeptide is Prolactin-3C1 (Prl3c1) (Rattus norvegicus (Rat)).